A 691-amino-acid chain; its full sequence is Elongation factor G (691 aa).

In terms of domain architecture, tr-type G spans 12–286 (KKLRNIGIMA…GVLEYLPSPL (275 aa)). Residues 21-28 (AHIDAGKT), 85-89 (DTPGH), and 139-142 (NKMD) contribute to the GTP site.

It belongs to the TRAFAC class translation factor GTPase superfamily. Classic translation factor GTPase family. EF-G/EF-2 subfamily.

Its subcellular location is the cytoplasm. Functionally, catalyzes the GTP-dependent ribosomal translocation step during translation elongation. During this step, the ribosome changes from the pre-translocational (PRE) to the post-translocational (POST) state as the newly formed A-site-bound peptidyl-tRNA and P-site-bound deacylated tRNA move to the P and E sites, respectively. Catalyzes the coordinated movement of the two tRNA molecules, the mRNA and conformational changes in the ribosome. This Thermosipho melanesiensis (strain DSM 12029 / CIP 104789 / BI429) protein is Elongation factor G.